A 477-amino-acid chain; its full sequence is POC1 centriolar protein homolog B (477 aa).

WD repeat units lie at residues 16–55, 58–97, 100–139, 142–181, 183–223, 226–265, and 268–307; these read GHKAAITSADFSPNCKQIATASWDTFLMLWSLKPHARAYR, GHKDVVTSLQFSPQGNLLASASRDKTVRLWVLDRKGKSSE, AHTAPVRSVDFSADGQFLVTASEDKSIKVWSMYRQRFLYS, RHTHWVRCAKFSPDGRLIVSCSEDKTIKIWDTTSKQCVNN, SDSV…LLQH, VHSCGVNCLSFHPSGNSLVTASSDGTVKILDLVEGRLIYT, and GHTGPVFTVSFSKDGELFTSGGADAQVLVWRTSFNQVHYR. Residues 449–469 adopt a coiled-coil conformation; sequence EQRLSLTEDKLKDCLENQQKL.

The protein belongs to the WD repeat POC1 family. As to quaternary structure, interacts with POC1A. Interacts with FAM161A. Interacts with CEP44; the interaction is direct and recruits POC1B to centriolar microtubules. Forms a microtubule-associated complex with POC5, CETN2 and FAM161A. Interacts with CCDC15. In terms of processing, phosphorylated in mitotic cells that may be mediated by CDK1.

It localises to the cytoplasm. The protein localises to the cytoskeleton. It is found in the microtubule organizing center. Its subcellular location is the centrosome. The protein resides in the centriole. It localises to the cilium basal body. The protein localises to the spindle pole. Functionally, plays an important role in centriole assembly and/or stability and ciliogenesis. Involved in early steps of centriole duplication, as well as in the later steps of centriole length control. Acts in concert with POC1A to ensure centriole integrity and proper mitotic spindle formation. Required for primary cilia formation, ciliary length and also cell proliferation. Required for retinal integrity. Acts as a positive regulator of centriole elongation. This Rattus norvegicus (Rat) protein is POC1 centriolar protein homolog B (Poc1b).